We begin with the raw amino-acid sequence, 473 residues long: Hyaluronidase-2 (473 aa).

The N-terminal stretch at 1–20 (MRAGPGPTVTLALVLAVSWA) is a signal peptide. 2 cysteine pairs are disulfide-bonded: Cys-47-Cys-340 and Cys-211-Cys-227. N-linked (GlcNAc...) asparagine glycans are attached at residues Asn-74 and Asn-103. Residue Glu-135 is the Proton donor of the active site. Asn-357 carries an N-linked (GlcNAc...) asparagine glycan. One can recognise an EGF-like domain in the interval 361–439 (ATQYCSRAQC…YLGWSGEQCQ (79 aa)). 3 disulfide bridges follow: Cys-365–Cys-376, Cys-370–Cys-427, and Cys-429–Cys-438. Gly-448 carries the GPI-anchor amidated glycine lipid modification. Positions 449–473 (ASEAWAGSHLTSLLALAALAFTWTL) are cleaved as a propeptide — removed in mature form.

It belongs to the glycosyl hydrolase 56 family. Interacts with MST1R. As to expression, widely expressed (at protein level).

The protein resides in the cell membrane. It catalyses the reaction Random hydrolysis of (1-&gt;4)-linkages between N-acetyl-beta-D-glucosamine and D-glucuronate residues in hyaluronate.. In terms of biological role, catalyzes hyaluronan degradation into small fragments that are endocytosed and degraded in lysosomes by HYAL1 and exoglycosidases. Essential for the breakdown of extracellular matrix hyaluronan. This is Hyaluronidase-2 (HYAL2) from Homo sapiens (Human).